We begin with the raw amino-acid sequence, 304 residues long: Dermonecrotic toxin LiSicTox-betaIA1ii (304 aa).

Positions 1 to 21 (MLLCAVISFIVYAVFLQEANG) are cleaved as a signal peptide. Residues 22 to 26 (HAAER) constitute a propeptide that is removed on maturation. Histidine 38 is an active-site residue. Residues glutamate 58 and aspartate 60 each contribute to the Mg(2+) site. Catalysis depends on histidine 74, which acts as the Nucleophile. 2 cysteine pairs are disulfide-bonded: cysteine 78/cysteine 84 and cysteine 80/cysteine 223. Aspartate 118 is a Mg(2+) binding site.

This sequence belongs to the arthropod phospholipase D family. Class II subfamily. Mg(2+) is required as a cofactor. In terms of tissue distribution, expressed by the venom gland.

It is found in the secreted. The enzyme catalyses an N-(acyl)-sphingosylphosphocholine = an N-(acyl)-sphingosyl-1,3-cyclic phosphate + choline. It catalyses the reaction an N-(acyl)-sphingosylphosphoethanolamine = an N-(acyl)-sphingosyl-1,3-cyclic phosphate + ethanolamine. The catalysed reaction is a 1-acyl-sn-glycero-3-phosphocholine = a 1-acyl-sn-glycero-2,3-cyclic phosphate + choline. It carries out the reaction a 1-acyl-sn-glycero-3-phosphoethanolamine = a 1-acyl-sn-glycero-2,3-cyclic phosphate + ethanolamine. In terms of biological role, dermonecrotic toxins cleave the phosphodiester linkage between the phosphate and headgroup of certain phospholipids (sphingolipid and lysolipid substrates), forming an alcohol (often choline) and a cyclic phosphate. This toxin acts on sphingomyelin (SM) with low activity. It may also act on ceramide phosphoethanolamine (CPE), lysophosphatidylcholine (LPC) and lysophosphatidylethanolamine (LPE), but not on lysophosphatidylserine (LPS), and lysophosphatidylglycerol (LPG). It acts by transphosphatidylation, releasing exclusively cyclic phosphate products as second products. Induces dermonecrosis, hemolysis, increased vascular permeability, edema, inflammatory response, and platelet aggregation. The protein is Dermonecrotic toxin LiSicTox-betaIA1ii of Loxosceles intermedia (Brown spider).